The chain runs to 83 residues: Large ribosomal subunit protein bL31B (83 aa).

It belongs to the bacterial ribosomal protein bL31 family. Type B subfamily. As to quaternary structure, part of the 50S ribosomal subunit.

In terms of biological role, binds the 23S rRNA. This chain is Large ribosomal subunit protein bL31B, found in Hydrogenovibrio crunogenus (strain DSM 25203 / XCL-2) (Thiomicrospira crunogena).